A 133-amino-acid polypeptide reads, in one-letter code: Fluoride-specific ion channel FluC (133 aa).

Transmembrane regions (helical) follow at residues 5–25, 43–63, 76–96, and 108–128; these read VPAT…LGAL, VATL…YVVI, VIMI…IESL, and ISYV…AIVL. Residues Gly-83 and Thr-86 each coordinate Na(+).

This sequence belongs to the fluoride channel Fluc/FEX (TC 1.A.43) family.

The protein resides in the cell inner membrane. It carries out the reaction fluoride(in) = fluoride(out). With respect to regulation, na(+) is not transported, but it plays an essential structural role and its presence is essential for fluoride channel function. Its function is as follows. Fluoride-specific ion channel. Important for reducing fluoride concentration in the cell, thus reducing its toxicity. This Saccharophagus degradans (strain 2-40 / ATCC 43961 / DSM 17024) protein is Fluoride-specific ion channel FluC.